A 100-amino-acid polypeptide reads, in one-letter code: Large ribosomal subunit protein uL23 (100 aa).

Belongs to the universal ribosomal protein uL23 family. In terms of assembly, part of the 50S ribosomal subunit. Contacts protein L29, and trigger factor when it is bound to the ribosome.

In terms of biological role, one of the early assembly proteins it binds 23S rRNA. One of the proteins that surrounds the polypeptide exit tunnel on the outside of the ribosome. Forms the main docking site for trigger factor binding to the ribosome. The protein is Large ribosomal subunit protein uL23 of Edwardsiella ictaluri (strain 93-146).